The primary structure comprises 147 residues: uncharacterized protein (147 aa).

2 helical membrane-spanning segments follow: residues 41–61 and 67–87; these read LANF…ALLI and LLAA…SFPL.

It is found in the cell membrane. This is an uncharacterized protein from Pyrococcus horikoshii (strain ATCC 700860 / DSM 12428 / JCM 9974 / NBRC 100139 / OT-3).